The chain runs to 238 residues: Uridylate kinase (238 aa).

Position 12–15 (12–15 (KLSG)) interacts with ATP. An involved in allosteric activation by GTP region spans residues 20–25 (GEKGFG). A UMP-binding site is contributed by glycine 54. ATP-binding residues include glycine 55 and arginine 59. UMP-binding positions include aspartate 72 and 133–140 (TGNPYFST). ATP is bound by residues tyrosine 166 and aspartate 169.

The protein belongs to the UMP kinase family. In terms of assembly, homohexamer.

Its subcellular location is the cytoplasm. The catalysed reaction is UMP + ATP = UDP + ADP. The protein operates within pyrimidine metabolism; CTP biosynthesis via de novo pathway; UDP from UMP (UMPK route): step 1/1. With respect to regulation, allosterically activated by GTP. Inhibited by UTP. Functionally, catalyzes the reversible phosphorylation of UMP to UDP. The chain is Uridylate kinase from Clostridium botulinum (strain Langeland / NCTC 10281 / Type F).